Consider the following 354-residue polypeptide: Guanine nucleotide-binding protein G(i) subunit alpha (354 aa).

A lipid anchor (N-myristoyl glycine) is attached at Gly2. The S-palmitoyl cysteine moiety is linked to residue Cys3. A G-alpha domain is found at 32–354 (REVKLLLLGA…KNNLKDCGLF (323 aa)). The G1 motif stretch occupies residues 35-48 (KLLLLGAGESGKST). GTP is bound by residues 40 to 47 (GAGESGKS), 175 to 181 (LRTRVKT), 200 to 204 (DVGGQ), 269 to 272 (NKKD), and Ala326. Ser47 and Thr181 together coordinate Mg(2+). Positions 173–181 (DVLRTRVKT) are G2 motif. The interval 196–205 (FKMFDVGGQR) is G3 motif. Residues 265 to 272 (ILFLNKKD) are G4 motif. The G5 motif stretch occupies residues 324 to 329 (TCATDT).

This sequence belongs to the G-alpha family. G(i/o/t/z) subfamily. G proteins are composed of 3 units; alpha, beta and gamma. The alpha chain contains the guanine nucleotide binding site.

Guanine nucleotide-binding proteins (G proteins) are involved as modulators or transducers in various transmembrane signaling systems. This G protein is involved in 1-methyladenine-induced oocyte maturation. This chain is Guanine nucleotide-binding protein G(i) subunit alpha, found in Patiria pectinifera (Starfish).